We begin with the raw amino-acid sequence, 393 residues long: UDP-N-acetylglucosamine--N-acetylmuramyl-(pentapeptide) pyrophosphoryl-undecaprenol N-acetylglucosamine transferase (393 aa).

UDP-N-acetyl-alpha-D-glucosamine-binding positions include 14 to 16 (TAG), asparagine 128, arginine 170, serine 210, and glutamine 321.

Belongs to the glycosyltransferase 28 family. MurG subfamily.

It is found in the cell membrane. The catalysed reaction is di-trans,octa-cis-undecaprenyl diphospho-N-acetyl-alpha-D-muramoyl-L-alanyl-D-glutamyl-meso-2,6-diaminopimeloyl-D-alanyl-D-alanine + UDP-N-acetyl-alpha-D-glucosamine = di-trans,octa-cis-undecaprenyl diphospho-[N-acetyl-alpha-D-glucosaminyl-(1-&gt;4)]-N-acetyl-alpha-D-muramoyl-L-alanyl-D-glutamyl-meso-2,6-diaminopimeloyl-D-alanyl-D-alanine + UDP + H(+). Its pathway is cell wall biogenesis; peptidoglycan biosynthesis. In terms of biological role, cell wall formation. Catalyzes the transfer of a GlcNAc subunit on undecaprenyl-pyrophosphoryl-MurNAc-pentapeptide (lipid intermediate I) to form undecaprenyl-pyrophosphoryl-MurNAc-(pentapeptide)GlcNAc (lipid intermediate II). The chain is UDP-N-acetylglucosamine--N-acetylmuramyl-(pentapeptide) pyrophosphoryl-undecaprenol N-acetylglucosamine transferase from Bifidobacterium adolescentis (strain ATCC 15703 / DSM 20083 / NCTC 11814 / E194a).